We begin with the raw amino-acid sequence, 431 residues long: Glutamate-1-semialdehyde 2,1-aminomutase (431 aa).

An N6-(pyridoxal phosphate)lysine modification is found at Lys-269.

This sequence belongs to the class-III pyridoxal-phosphate-dependent aminotransferase family. HemL subfamily. In terms of assembly, homodimer. Requires pyridoxal 5'-phosphate as cofactor.

Its subcellular location is the cytoplasm. It catalyses the reaction (S)-4-amino-5-oxopentanoate = 5-aminolevulinate. It functions in the pathway porphyrin-containing compound metabolism; protoporphyrin-IX biosynthesis; 5-aminolevulinate from L-glutamyl-tRNA(Glu): step 2/2. Its pathway is porphyrin-containing compound metabolism; chlorophyll biosynthesis. The polypeptide is Glutamate-1-semialdehyde 2,1-aminomutase (Chlorobaculum tepidum (strain ATCC 49652 / DSM 12025 / NBRC 103806 / TLS) (Chlorobium tepidum)).